A 465-amino-acid chain; its full sequence is Chromosomal replication initiator protein DnaA (465 aa).

The segment at 1 to 87 is domain I, interacts with DnaA modulators; sequence MLWTDCLTRL…RPGSILSSSE (87 aa). The tract at residues 81 to 123 is disordered; sequence SILSSSEQPATTTAALQTAPIPQPAKVKREPEPVANTAVSSKS. Over residues 88–100 the composition is skewed to low complexity; sequence QPATTTAALQTAP. The tract at residues 88-127 is domain II; that stretch reads QPATTTAALQTAPIPQPAKVKREPEPVANTAVSSKSSKKK. Residues 128-345 are domain III, AAA+ region; sequence LLNPQFTFSL…GALNKVVAIS (218 aa). ATP-binding residues include Gly173, Gly175, Lys176, and Thr177. The interval 346–465 is domain IV, binds dsDNA; that stretch reads RFKGAPIDLD…YKNLLRLLQS (120 aa).

It belongs to the DnaA family. In terms of assembly, oligomerizes as a right-handed, spiral filament on DNA at oriC.

The protein resides in the cytoplasm. Functionally, plays an essential role in the initiation and regulation of chromosomal replication. ATP-DnaA binds to the origin of replication (oriC) to initiate formation of the DNA replication initiation complex once per cell cycle. Binds the DnaA box (a 9 base pair repeat at the origin) and separates the double-stranded (ds)DNA. Forms a right-handed helical filament on oriC DNA; dsDNA binds to the exterior of the filament while single-stranded (ss)DNA is stabiized in the filament's interior. The ATP-DnaA-oriC complex binds and stabilizes one strand of the AT-rich DNA unwinding element (DUE), permitting loading of DNA polymerase. After initiation quickly degrades to an ADP-DnaA complex that is not apt for DNA replication. Binds acidic phospholipids. This chain is Chromosomal replication initiator protein DnaA, found in Acinetobacter baumannii (strain ATCC 17978 / DSM 105126 / CIP 53.77 / LMG 1025 / NCDC KC755 / 5377).